The primary structure comprises 230 residues: Thymidylate kinase (230 aa).

20 to 27 (GGEGSGKS) lines the ATP pocket.

It belongs to the thymidylate kinase family.

It catalyses the reaction dTMP + ATP = dTDP + ADP. Phosphorylation of dTMP to form dTDP in both de novo and salvage pathways of dTTP synthesis. The chain is Thymidylate kinase from Nitrobacter winogradskyi (strain ATCC 25391 / DSM 10237 / CIP 104748 / NCIMB 11846 / Nb-255).